The chain runs to 89 residues: Small ribosomal subunit protein uS15 (89 aa).

Belongs to the universal ribosomal protein uS15 family. In terms of assembly, part of the 30S ribosomal subunit. Forms a bridge to the 50S subunit in the 70S ribosome, contacting the 23S rRNA.

One of the primary rRNA binding proteins, it binds directly to 16S rRNA where it helps nucleate assembly of the platform of the 30S subunit by binding and bridging several RNA helices of the 16S rRNA. Functionally, forms an intersubunit bridge (bridge B4) with the 23S rRNA of the 50S subunit in the ribosome. The polypeptide is Small ribosomal subunit protein uS15 (Granulibacter bethesdensis (strain ATCC BAA-1260 / CGDNIH1)).